The primary structure comprises 235 residues: Probable transcriptional regulatory protein MPN_478 (235 aa).

This sequence belongs to the TACO1 family.

It localises to the cytoplasm. The chain is Probable transcriptional regulatory protein MPN_478 from Mycoplasma pneumoniae (strain ATCC 29342 / M129 / Subtype 1) (Mycoplasmoides pneumoniae).